Reading from the N-terminus, the 149-residue chain is Calmodulin (149 aa).

EF-hand domains lie at 8 to 43, 44 to 79, 81 to 116, and 117 to 149; these read QQIA…LGQN, PSES…KMKD, DSEA…IGEK, and LSDA…LAAK. Ca(2+)-binding residues include Asp21, Asp23, Asp25, Lys27, Glu32, Asp57, Asn59, Asp61, Ser63, Glu68, Asp94, Asn96, Asp98, Lys100, Glu105, Asp130, Asn132, Asp134, Glu136, and Glu141.

This sequence belongs to the calmodulin family.

In terms of biological role, calmodulin mediates the control of a large number of enzymes, ion channels and other proteins by Ca(2+). Among the enzymes to be stimulated by the calmodulin-Ca(2+) complex are a number of protein kinases and phosphatases. In Candida albicans (Yeast), this protein is Calmodulin (CMD1).